A 247-amino-acid polypeptide reads, in one-letter code: Isoprenyl transferase (247 aa).

Residue Asp-18 is part of the active site. Residue Asp-18 participates in Mg(2+) binding. Residues 19–22 (GNGR), Trp-23, Arg-31, His-35, and 63–65 (SSE) each bind substrate. Catalysis depends on Asn-66, which acts as the Proton acceptor. Substrate is bound by residues Trp-67, Arg-69, Arg-186, and 192–194 (RLS). Glu-205 is a binding site for Mg(2+).

This sequence belongs to the UPP synthase family. Homodimer. Mg(2+) is required as a cofactor.

In terms of biological role, catalyzes the condensation of isopentenyl diphosphate (IPP) with allylic pyrophosphates generating different type of terpenoids. The chain is Isoprenyl transferase from Rhizobium meliloti (strain 1021) (Ensifer meliloti).